Consider the following 415-residue polypeptide: Serine hydroxymethyltransferase 1 (415 aa).

(6S)-5,6,7,8-tetrahydrofolate contacts are provided by residues L117 and 121–123; that span reads GHL. K225 carries the N6-(pyridoxal phosphate)lysine modification. 349-351 contacts (6S)-5,6,7,8-tetrahydrofolate; that stretch reads SPF.

It belongs to the SHMT family. As to quaternary structure, homodimer. The cofactor is pyridoxal 5'-phosphate.

It is found in the cytoplasm. The catalysed reaction is (6R)-5,10-methylene-5,6,7,8-tetrahydrofolate + glycine + H2O = (6S)-5,6,7,8-tetrahydrofolate + L-serine. The protein operates within one-carbon metabolism; tetrahydrofolate interconversion. It functions in the pathway amino-acid biosynthesis; glycine biosynthesis; glycine from L-serine: step 1/1. Functionally, catalyzes the reversible interconversion of serine and glycine with tetrahydrofolate (THF) serving as the one-carbon carrier. This reaction serves as the major source of one-carbon groups required for the biosynthesis of purines, thymidylate, methionine, and other important biomolecules. Also exhibits THF-independent aldolase activity toward beta-hydroxyamino acids, producing glycine and aldehydes, via a retro-aldol mechanism. This chain is Serine hydroxymethyltransferase 1, found in Sulfurimonas denitrificans (strain ATCC 33889 / DSM 1251) (Thiomicrospira denitrificans (strain ATCC 33889 / DSM 1251)).